A 554-amino-acid chain; its full sequence is Dihydroxy-acid dehydratase (554 aa).

C48 contributes to the [2Fe-2S] cluster binding site. Mg(2+) is bound at residue D80. [2Fe-2S] cluster is bound at residue C121. The Mg(2+) site is built by D122 and K123. The residue at position 123 (K123) is an N6-carboxylysine. C193 serves as a coordination point for [2Fe-2S] cluster. E444 contributes to the Mg(2+) binding site. Catalysis depends on S470, which acts as the Proton acceptor.

It belongs to the IlvD/Edd family. As to quaternary structure, homodimer. Requires [2Fe-2S] cluster as cofactor. It depends on Mg(2+) as a cofactor.

The enzyme catalyses (2R)-2,3-dihydroxy-3-methylbutanoate = 3-methyl-2-oxobutanoate + H2O. It catalyses the reaction (2R,3R)-2,3-dihydroxy-3-methylpentanoate = (S)-3-methyl-2-oxopentanoate + H2O. The protein operates within amino-acid biosynthesis; L-isoleucine biosynthesis; L-isoleucine from 2-oxobutanoate: step 3/4. It participates in amino-acid biosynthesis; L-valine biosynthesis; L-valine from pyruvate: step 3/4. In terms of biological role, functions in the biosynthesis of branched-chain amino acids. Catalyzes the dehydration of (2R,3R)-2,3-dihydroxy-3-methylpentanoate (2,3-dihydroxy-3-methylvalerate) into 2-oxo-3-methylpentanoate (2-oxo-3-methylvalerate) and of (2R)-2,3-dihydroxy-3-methylbutanoate (2,3-dihydroxyisovalerate) into 2-oxo-3-methylbutanoate (2-oxoisovalerate), the penultimate precursor to L-isoleucine and L-valine, respectively. This is Dihydroxy-acid dehydratase from Tremblaya princeps.